A 266-amino-acid polypeptide reads, in one-letter code: GTP cyclohydrolase III (266 aa).

This sequence belongs to the archaeal-type GTP cyclohydrolase family.

It carries out the reaction GTP + 3 H2O = 2-amino-5-formylamino-6-(5-phospho-D-ribosylamino)pyrimidin-4(3H)-one + 2 phosphate + 2 H(+). Catalyzes the formation of 2-amino-5-formylamino-6-ribofuranosylamino-4(3H)-pyrimidinone ribonucleotide monophosphate and inorganic phosphate from GTP. Also has an independent pyrophosphate phosphohydrolase activity. The protein is GTP cyclohydrolase III of Methanococcus maripaludis (strain C5 / ATCC BAA-1333).